The sequence spans 196 residues: Holliday junction branch migration complex subunit RuvA (196 aa).

The segment at 1–63 (MINKICGKIV…EDEIRLFGFL (63 aa)) is domain I. A domain II region spans residues 64–135 (NVSEREVFEK…KLRGKLVKVN (72 aa)). The tract at residues 135–138 (NEAS) is flexible linker. The tract at residues 139–196 (SGVLKFKELEQSIVNMGFDRKLVAAAIKEIMLIDEFLMLRQVDQEQFLFREILRKLSG) is domain III.

Belongs to the RuvA family. As to quaternary structure, homotetramer. Forms an RuvA(8)-RuvB(12)-Holliday junction (HJ) complex. HJ DNA is sandwiched between 2 RuvA tetramers; dsDNA enters through RuvA and exits via RuvB. An RuvB hexamer assembles on each DNA strand where it exits the tetramer. Each RuvB hexamer is contacted by two RuvA subunits (via domain III) on 2 adjacent RuvB subunits; this complex drives branch migration. In the full resolvosome a probable DNA-RuvA(4)-RuvB(12)-RuvC(2) complex forms which resolves the HJ.

The protein resides in the cytoplasm. In terms of biological role, the RuvA-RuvB-RuvC complex processes Holliday junction (HJ) DNA during genetic recombination and DNA repair, while the RuvA-RuvB complex plays an important role in the rescue of blocked DNA replication forks via replication fork reversal (RFR). RuvA specifically binds to HJ cruciform DNA, conferring on it an open structure. The RuvB hexamer acts as an ATP-dependent pump, pulling dsDNA into and through the RuvAB complex. HJ branch migration allows RuvC to scan DNA until it finds its consensus sequence, where it cleaves and resolves the cruciform DNA. The protein is Holliday junction branch migration complex subunit RuvA of Borrelia turicatae (strain 91E135).